The primary structure comprises 426 residues: Enolase (426 aa).

Glutamine 163 is a (2R)-2-phosphoglycerate binding site. Glutamate 205 serves as the catalytic Proton donor. The Mg(2+) site is built by aspartate 242, glutamate 285, and aspartate 312. Residues lysine 337, arginine 366, serine 367, and lysine 388 each coordinate (2R)-2-phosphoglycerate. Lysine 337 serves as the catalytic Proton acceptor.

This sequence belongs to the enolase family. Requires Mg(2+) as cofactor.

The protein localises to the cytoplasm. The protein resides in the secreted. Its subcellular location is the cell surface. The enzyme catalyses (2R)-2-phosphoglycerate = phosphoenolpyruvate + H2O. It functions in the pathway carbohydrate degradation; glycolysis; pyruvate from D-glyceraldehyde 3-phosphate: step 4/5. Its function is as follows. Catalyzes the reversible conversion of 2-phosphoglycerate (2-PG) into phosphoenolpyruvate (PEP). It is essential for the degradation of carbohydrates via glycolysis. The sequence is that of Enolase from Rhodospirillum centenum (strain ATCC 51521 / SW).